The primary structure comprises 279 residues: Non-structural protein 2 (279 aa).

ATP is bound by residues 119–121 (DVL), lysine 201, and 229–231 (HGH). Positions 214-249 (MLALKAVAGNQFFMYHGHGHIRTVPYHELLTLSNHS) are RNA-binding. Residue histidine 233 is the For NTPase and RTPase activities of the active site. Residue arginine 235 coordinates ATP.

The protein belongs to the rotavirus NSP2 family. Homooctamer. Interacts with VP1; this interaction is weak. Interacts with NSP5; this interaction leads to up-regulation of NSP5 phosphorylation and formation of viral factories. Mg(2+) serves as cofactor.

Its subcellular location is the host cytoplasm. In terms of biological role, participates in replication and packaging of the viral genome. Plays a crucial role, together with NSP5, in the formation of virus factories (viroplasms) which are large inclusions in the host cytoplasm where replication intermediates are assembled and viral RNA replication takes place. Displays ssRNA binding, NTPase, RNA triphosphatase (RTPase) and ATP-independent helix-unwinding activities. The unwinding activity may prepare and organize plus-strand RNAs for packaging and replication by removing interfering secondary structures. The RTPase activity plays a role in the removal of the gamma-phosphate from the rotavirus RNA minus strands of dsRNA genome segments. This Homo sapiens (Human) protein is Non-structural protein 2.